The following is a 735-amino-acid chain: Phosphoribosylformylglycinamidine synthase subunit PurL (735 aa).

Residue H50 is part of the active site. Residues Y53 and K92 each contribute to the ATP site. E94 is a Mg(2+) binding site. Substrate-binding positions include 95–98 and R117; that span reads SHNH. H96 functions as the Proton acceptor in the catalytic mechanism. A Mg(2+)-binding site is contributed by D118. Residue Q241 participates in substrate binding. A Mg(2+)-binding site is contributed by D269. 313–315 provides a ligand contact to substrate; that stretch reads ESQ. Residues D495 and G532 each coordinate ATP. A Mg(2+)-binding site is contributed by N533. S535 contacts substrate.

It belongs to the FGAMS family. Monomer. Part of the FGAM synthase complex composed of 1 PurL, 1 PurQ and 2 PurS subunits.

The protein localises to the cytoplasm. It catalyses the reaction N(2)-formyl-N(1)-(5-phospho-beta-D-ribosyl)glycinamide + L-glutamine + ATP + H2O = 2-formamido-N(1)-(5-O-phospho-beta-D-ribosyl)acetamidine + L-glutamate + ADP + phosphate + H(+). Its pathway is purine metabolism; IMP biosynthesis via de novo pathway; 5-amino-1-(5-phospho-D-ribosyl)imidazole from N(2)-formyl-N(1)-(5-phospho-D-ribosyl)glycinamide: step 1/2. In terms of biological role, part of the phosphoribosylformylglycinamidine synthase complex involved in the purines biosynthetic pathway. Catalyzes the ATP-dependent conversion of formylglycinamide ribonucleotide (FGAR) and glutamine to yield formylglycinamidine ribonucleotide (FGAM) and glutamate. The FGAM synthase complex is composed of three subunits. PurQ produces an ammonia molecule by converting glutamine to glutamate. PurL transfers the ammonia molecule to FGAR to form FGAM in an ATP-dependent manner. PurS interacts with PurQ and PurL and is thought to assist in the transfer of the ammonia molecule from PurQ to PurL. The polypeptide is Phosphoribosylformylglycinamidine synthase subunit PurL (Bartonella henselae (strain ATCC 49882 / DSM 28221 / CCUG 30454 / Houston 1) (Rochalimaea henselae)).